The primary structure comprises 130 residues: Mating-type-like protein A1 (130 aa).

A DNA-binding region (homeobox) is located at residues Thr68–Asn127.

This sequence belongs to the MATA1 family.

It localises to the nucleus. In terms of biological role, mating type proteins are sequence specific DNA-binding proteins that act as master switches in yeast differentiation by controlling gene expression in a cell type-specific fashion. The polypeptide is Mating-type-like protein A1 (MTL1A1) (Candida glabrata (strain ATCC 2001 / BCRC 20586 / JCM 3761 / NBRC 0622 / NRRL Y-65 / CBS 138) (Yeast)).